A 180-amino-acid chain; its full sequence is Capsid assembly scaffolding protein (180 aa).

Belongs to the SPP1-like scaffolding protein family. Homodimer.

In terms of biological role, scaffolding protein involved in the icosahedric procapsid assembly. Coassembles with the capsid proteins to form the procapsid, in which the scaffolding protein is found within the external shell of icosahedrally arranged capsid protein subunits. In a subsequent step the scaffolding protein molecules are released from the procapsid. The protein is Capsid assembly scaffolding protein (g20) of Lactococcus phage mv4 (Lactococcus delbrueckii bacteriophage mv4).